Reading from the N-terminus, the 343-residue chain is Autoinducer 2 import system permease protein LsrC (343 aa).

The next 9 helical transmembrane spans lie at 13–33 (FLAI…YLSF), 38–58 (MIFA…LVML), 61–81 (NIDV…GVAL), 92–112 (LFAL…VVGL), 114–134 (IPAI…MLLW), 154–174 (VALG…IGAW), 212–232 (INGM…GFVP), 251–271 (GISL…AFFL), and 283–303 (LPAW…LVLD). The interval 321–343 (RFQPGNKGGKHVTPFPKRKKEVA) is disordered.

This sequence belongs to the binding-protein-dependent transport system permease family. AraH/RbsC subfamily. In terms of assembly, the complex is composed of two ATP-binding proteins (LsrA), two transmembrane proteins (LsrC and LsrD) and a solute-binding protein (LsrB).

It is found in the cell inner membrane. In terms of biological role, part of the ABC transporter complex LsrABCD involved in autoinducer 2 (AI-2) import. Probably responsible for the translocation of the substrate across the membrane. The chain is Autoinducer 2 import system permease protein LsrC (lsrC) from Enterobacter sp. (strain 638).